Consider the following 262-residue polypeptide: 3-methyl-2-oxobutanoate hydroxymethyltransferase (262 aa).

Positions 44 and 83 each coordinate Mg(2+). Residues 44–45 (DS), D83, and K112 contribute to the 3-methyl-2-oxobutanoate site. E114 contributes to the Mg(2+) binding site. E180 (proton acceptor) is an active-site residue.

It belongs to the PanB family. As to quaternary structure, homodecamer; pentamer of dimers. It depends on Mg(2+) as a cofactor.

It localises to the cytoplasm. The enzyme catalyses 3-methyl-2-oxobutanoate + (6R)-5,10-methylene-5,6,7,8-tetrahydrofolate + H2O = 2-dehydropantoate + (6S)-5,6,7,8-tetrahydrofolate. It participates in cofactor biosynthesis; (R)-pantothenate biosynthesis; (R)-pantoate from 3-methyl-2-oxobutanoate: step 1/2. In terms of biological role, catalyzes the reversible reaction in which hydroxymethyl group from 5,10-methylenetetrahydrofolate is transferred onto alpha-ketoisovalerate to form ketopantoate. The chain is 3-methyl-2-oxobutanoate hydroxymethyltransferase from Chromobacterium violaceum (strain ATCC 12472 / DSM 30191 / JCM 1249 / CCUG 213 / NBRC 12614 / NCIMB 9131 / NCTC 9757 / MK).